A 180-amino-acid polypeptide reads, in one-letter code: Crossover junction endodeoxyribonuclease RuvC (180 aa).

Catalysis depends on residues aspartate 7, glutamate 66, and aspartate 138. Residues aspartate 7, glutamate 66, and aspartate 138 each contribute to the Mg(2+) site.

This sequence belongs to the RuvC family. Homodimer which binds Holliday junction (HJ) DNA. The HJ becomes 2-fold symmetrical on binding to RuvC with unstacked arms; it has a different conformation from HJ DNA in complex with RuvA. In the full resolvosome a probable DNA-RuvA(4)-RuvB(12)-RuvC(2) complex forms which resolves the HJ. The cofactor is Mg(2+).

It localises to the cytoplasm. The catalysed reaction is Endonucleolytic cleavage at a junction such as a reciprocal single-stranded crossover between two homologous DNA duplexes (Holliday junction).. In terms of biological role, the RuvA-RuvB-RuvC complex processes Holliday junction (HJ) DNA during genetic recombination and DNA repair. Endonuclease that resolves HJ intermediates. Cleaves cruciform DNA by making single-stranded nicks across the HJ at symmetrical positions within the homologous arms, yielding a 5'-phosphate and a 3'-hydroxyl group; requires a central core of homology in the junction. The consensus cleavage sequence is 5'-(A/T)TT(C/G)-3'. Cleavage occurs on the 3'-side of the TT dinucleotide at the point of strand exchange. HJ branch migration catalyzed by RuvA-RuvB allows RuvC to scan DNA until it finds its consensus sequence, where it cleaves and resolves the cruciform DNA. This is Crossover junction endodeoxyribonuclease RuvC from Paraburkholderia xenovorans (strain LB400).